The chain runs to 453 residues: Putative sodium-coupled neutral amino acid transporter 11 (453 aa).

Residues 1–10 (MSYQQPQLSG) are compositionally biased toward polar residues. The disordered stretch occupies residues 1-34 (MSYQQPQLSGPLQRETDSSDRESLISGHEHGGKS). Over residues 14–32 (RETDSSDRESLISGHEHGG) the composition is skewed to basic and acidic residues. Helical transmembrane passes span 39–59 (AVFN…PYSM), 66–86 (LGIL…VLLI), 106–126 (GFPG…IAMI), 150–170 (GWFI…TLPL), 179–199 (LGKI…IVMT), 222–242 (AIQA…CFLV), 262–282 (ILVS…TFTG), 299–319 (VTFG…IECF), 337–357 (VFHT…SLMI), 359–379 (CLGI…IFII), and 398–418 (IMAC…FVMA). 2 N-linked (GlcNAc...) asparagine glycosylation sites follow: Asn438 and Asn443.

This sequence belongs to the amino acid/polyamine transporter 2 family.

It localises to the membrane. Its function is as follows. Putative sodium-dependent amino acid/proton antiporter. The protein is Putative sodium-coupled neutral amino acid transporter 11 (Slc38a11) of Mus musculus (Mouse).